The chain runs to 285 residues: Small ribosomal subunit protein uS2 (285 aa).

Positions Ala229–Phe285 are disordered. The span at Ala257–Phe285 shows a compositional bias: low complexity.

This sequence belongs to the universal ribosomal protein uS2 family.

The sequence is that of Small ribosomal subunit protein uS2 from Nocardia farcinica (strain IFM 10152).